The following is a 544-amino-acid chain: Formate--tetrahydrofolate ligase (544 aa).

63–70 (TPAGEGKS) lines the ATP pocket.

The protein belongs to the formate--tetrahydrofolate ligase family.

The catalysed reaction is (6S)-5,6,7,8-tetrahydrofolate + formate + ATP = (6R)-10-formyltetrahydrofolate + ADP + phosphate. Its pathway is one-carbon metabolism; tetrahydrofolate interconversion. The polypeptide is Formate--tetrahydrofolate ligase (Fusobacterium nucleatum subsp. nucleatum (strain ATCC 25586 / DSM 15643 / BCRC 10681 / CIP 101130 / JCM 8532 / KCTC 2640 / LMG 13131 / VPI 4355)).